Consider the following 94-residue polypeptide: uncharacterized protein (94 aa).

Helical transmembrane passes span 9–29 (TLAKIVCTVTLITLYFYFFST) and 34–54 (LIELAVQMFFALIGLFWVFIV).

The protein localises to the cell membrane. This is an uncharacterized protein from Bacillus subtilis (strain 168).